We begin with the raw amino-acid sequence, 601 residues long: NADH-quinone oxidoreductase subunit C/D (601 aa).

Residues 1–191 form an NADH dehydrogenase I subunit C region; it reads MKLTRDFPHN…DPFMLDAAKQ (191 aa). An NADH dehydrogenase I subunit D region spans residues 215–601; the sequence is DYMFLNLGPN…IDFVMSDVDR (387 aa).

The protein in the N-terminal section; belongs to the complex I 30 kDa subunit family. This sequence in the C-terminal section; belongs to the complex I 49 kDa subunit family. In terms of assembly, NDH-1 is composed of 13 different subunits. Subunits NuoB, CD, E, F, and G constitute the peripheral sector of the complex.

It localises to the cell inner membrane. The enzyme catalyses a quinone + NADH + 5 H(+)(in) = a quinol + NAD(+) + 4 H(+)(out). Functionally, NDH-1 shuttles electrons from NADH, via FMN and iron-sulfur (Fe-S) centers, to quinones in the respiratory chain. The immediate electron acceptor for the enzyme in this species is believed to be ubiquinone. Couples the redox reaction to proton translocation (for every two electrons transferred, four hydrogen ions are translocated across the cytoplasmic membrane), and thus conserves the redox energy in a proton gradient. The polypeptide is NADH-quinone oxidoreductase subunit C/D (Shewanella oneidensis (strain ATCC 700550 / JCM 31522 / CIP 106686 / LMG 19005 / NCIMB 14063 / MR-1)).